The primary structure comprises 310 residues: MRILFLGSPSFAVHALEALVAAGHEIVGVVTQPDRPAGRDRRLTPPPVKIAAMAHNLPVLQPETLRDPTVVETLSALQPEVGVVAAYGEILRRAVLSIPPLGYLNIHPSLLPLYRGPTPVAGAILAGETVTGVTIMLLDPSMDSGPILAQAVVDLPPTARAGQLTDELFRIGADLLVQVLPRYARGEIEPRPQDHSRATVTKMLKKEDGRIDWSLPAIVIERMTRAYDPWPGAYTFWRGQPLRIIKAAVASADGTNVPGTVIGRSGSGHPLVQTGSDALELIEVQPASRRPMSGSAWLAGVHADNIRLGE.

Position 109–112 (109–112) interacts with (6S)-5,6,7,8-tetrahydrofolate; it reads SLLP.

Belongs to the Fmt family.

The catalysed reaction is L-methionyl-tRNA(fMet) + (6R)-10-formyltetrahydrofolate = N-formyl-L-methionyl-tRNA(fMet) + (6S)-5,6,7,8-tetrahydrofolate + H(+). Its function is as follows. Attaches a formyl group to the free amino group of methionyl-tRNA(fMet). The formyl group appears to play a dual role in the initiator identity of N-formylmethionyl-tRNA by promoting its recognition by IF2 and preventing the misappropriation of this tRNA by the elongation apparatus. This chain is Methionyl-tRNA formyltransferase, found in Chloroflexus aurantiacus (strain ATCC 29366 / DSM 635 / J-10-fl).